The chain runs to 257 residues: Homeobox protein goosecoid (257 aa).

The segment at residues 160-219 (KRRHRTIFTDEQLEALENLFQETKYPDVGTREQLARKVHLREEKVEVWFKNRRAKWRRQK) is a DNA-binding region (homeobox). Positions 213 to 257 (AKWRRQKRSSSEESENAEKWNKTSSSKASPEKREEEGKSDLDSDS) are disordered. Over residues 241-257 (SPEKREEEGKSDLDSDS) the composition is skewed to basic and acidic residues.

It belongs to the paired homeobox family. Bicoid subfamily.

Its subcellular location is the nucleus. In terms of biological role, regulates chordin (CHRD). May play a role in spatial programing within discrete embryonic fields or lineage compartments during organogenesis. In concert with NKX3-2, plays a role in defining the structural components of the middle ear; required for the development of the entire tympanic ring. Probably involved in the regulatory networks that define neural crest cell fate specification and determine mesoderm cell lineages in mammals. The polypeptide is Homeobox protein goosecoid (GSC) (Homo sapiens (Human)).